The following is a 154-amino-acid chain: Mitochondrial fission 1 protein (154 aa).

The Cytoplasmic portion of the chain corresponds to 1 to 124 (MEDLLNEVVP…KEIDKEVAKG (124 aa)). A helical transmembrane segment spans residues 125 to 145 (MVVAGGAALVLGGILGLGIAM). Residues 146 to 154 (ARNKQKREK) are Mitochondrial intermembrane-facing.

This sequence belongs to the FIS1 family.

The protein resides in the mitochondrion outer membrane. Involved in the fragmentation of the mitochondrial network and its perinuclear clustering. Functions downstream of Pink1 and upstream of Drp1 to regulate mitochondrial fission. The chain is Mitochondrial fission 1 protein from Drosophila melanogaster (Fruit fly).